We begin with the raw amino-acid sequence, 379 residues long: 3-dehydroquinate synthase (379 aa).

NAD(+) contacts are provided by residues 67–72, 101–105, 125–126, Lys-138, and Lys-147; these read PGEKNK, GIILD, and TT. The Zn(2+) site is built by Glu-180, His-242, and His-258.

Belongs to the sugar phosphate cyclases superfamily. Dehydroquinate synthase family. Requires NAD(+) as cofactor. The cofactor is Co(2+). It depends on Zn(2+) as a cofactor.

It localises to the cytoplasm. The enzyme catalyses 7-phospho-2-dehydro-3-deoxy-D-arabino-heptonate = 3-dehydroquinate + phosphate. It participates in metabolic intermediate biosynthesis; chorismate biosynthesis; chorismate from D-erythrose 4-phosphate and phosphoenolpyruvate: step 2/7. In terms of biological role, catalyzes the conversion of 3-deoxy-D-arabino-heptulosonate 7-phosphate (DAHP) to dehydroquinate (DHQ). The sequence is that of 3-dehydroquinate synthase from Chlamydia caviae (strain ATCC VR-813 / DSM 19441 / 03DC25 / GPIC) (Chlamydophila caviae).